A 129-amino-acid chain; its full sequence is Lysozyme C-1/C-2 (129 aa).

The 129-residue stretch at 1–129 folds into the C-type lysozyme domain; that stretch reads KVFERCELAR…VSSYVEGCTL (129 aa). Cystine bridges form between Cys6–Cys127, Cys30–Cys115, Cys65–Cys81, and Cys77–Cys95. Residues Glu35 and Asp53 contribute to the active site.

This sequence belongs to the glycosyl hydrolase 22 family. In terms of assembly, monomer.

The enzyme catalyses Hydrolysis of (1-&gt;4)-beta-linkages between N-acetylmuramic acid and N-acetyl-D-glucosamine residues in a peptidoglycan and between N-acetyl-D-glucosamine residues in chitodextrins.. Functionally, lysozymes have primarily a bacteriolytic function; those in tissues and body fluids are associated with the monocyte-macrophage system and enhance the activity of immunoagents. This chain is Lysozyme C-1/C-2, found in Axis axis (Axis deer).